Here is a 447-residue protein sequence, read N- to C-terminus: Membrane metalloprotease ARASP, chloroplastic (447 aa).

A chloroplast-targeting transit peptide spans 1–73; it reads MLLNISSSPI…YPDGERFDFR (73 aa). His102 serves as a coordination point for Zn(2+). Residue Glu103 is part of the active site. Position 106 (His106) interacts with Zn(2+). Residues 177–197 traverse the membrane as a helical segment; the sequence is SIVVSAGIIANVIFAYAIIFV. One can recognise a PDZ domain in the interval 202-244; the sequence is VGLPVQEAFPGVLVPEVKTFSAASRDGLLSGDVILAVDGTELS. 2 helical membrane-spanning segments follow: residues 379 to 399 and 413 to 433; these read LAVI…ALIL and VEQG…LFLI.

Belongs to the peptidase M50A family. It depends on Zn(2+) as a cofactor. As to expression, expressed in green seedlings and cotyledons. Low levels of expression in roots, siliques and seeds.

The protein localises to the plastid. Its subcellular location is the chloroplast inner membrane. In terms of biological role, metalloprotease essential for chloroplast and plant development. May be involved in regulated intramembrane proteolysis (RIP). This is Membrane metalloprotease ARASP, chloroplastic from Arabidopsis thaliana (Mouse-ear cress).